The chain runs to 246 residues: Biosynthetic peptidoglycan transglycosylase (246 aa).

Residues Phe28–Pro48 form a helical membrane-spanning segment.

It belongs to the glycosyltransferase 51 family.

Its subcellular location is the cell inner membrane. The catalysed reaction is [GlcNAc-(1-&gt;4)-Mur2Ac(oyl-L-Ala-gamma-D-Glu-L-Lys-D-Ala-D-Ala)](n)-di-trans,octa-cis-undecaprenyl diphosphate + beta-D-GlcNAc-(1-&gt;4)-Mur2Ac(oyl-L-Ala-gamma-D-Glu-L-Lys-D-Ala-D-Ala)-di-trans,octa-cis-undecaprenyl diphosphate = [GlcNAc-(1-&gt;4)-Mur2Ac(oyl-L-Ala-gamma-D-Glu-L-Lys-D-Ala-D-Ala)](n+1)-di-trans,octa-cis-undecaprenyl diphosphate + di-trans,octa-cis-undecaprenyl diphosphate + H(+). Its pathway is cell wall biogenesis; peptidoglycan biosynthesis. Peptidoglycan polymerase that catalyzes glycan chain elongation from lipid-linked precursors. The polypeptide is Biosynthetic peptidoglycan transglycosylase (Pasteurella multocida (strain Pm70)).